The following is a 468-amino-acid chain: Soluble pyridine nucleotide transhydrogenase (468 aa).

36–45 (ERYKNVGGGC) provides a ligand contact to FAD.

This sequence belongs to the class-I pyridine nucleotide-disulfide oxidoreductase family. FAD serves as cofactor.

The protein localises to the cytoplasm. It catalyses the reaction NAD(+) + NADPH = NADH + NADP(+). Conversion of NADPH, generated by peripheral catabolic pathways, to NADH, which can enter the respiratory chain for energy generation. This chain is Soluble pyridine nucleotide transhydrogenase, found in Hamiltonella defensa subsp. Acyrthosiphon pisum (strain 5AT).